A 212-amino-acid polypeptide reads, in one-letter code: MEAKTLGTVTPRKPVLSVSARKIKDNAADWHNLILKWETLNDGGFATANSIANMKISLSSKDKIELASSGLASNDCAEKEHPEYSRELETLCEELQATLEGLTKIQMKMEKLSSTTKGVCELEDYHHGEERKRPPLFHTWPTAHFYEVSRKLSDMYSQELRLKRTVVEQLAHTADRDLALSYLSMWLHQPYLEAGSWLLLESMLLETGHRVL.

Position 1 is an N-acetylmethionine (Met1). Ser69 and Ser73 each carry phosphoserine. Residues 74-106 (NDCAEKEHPEYSRELETLCEELQATLEGLTKIQ) are a coiled coil.

It belongs to the CINP family. In terms of assembly, homodimer. Part of the 55LCC heterohexameric ATPase complex composed at least of AIRIM, AFG2A, AFG2B and CINP. Interacts with AIRIM. Interacts with CDK2 and CDC7. Interacts with the components of the replication complex, MCM2, MCM3, MCM4, MCM5, MCM6, MCM7 and with ORC2-containing complexes. Interacts with ATRIP. Interacts with CEP152. Associates with pre-60S ribosomal particles. Phosphorylated by CDC7 but not by CDK2.

The protein resides in the nucleus. In terms of biological role, component of the DNA replication complex, which interacts with two kinases, CDK2 and CDC7, thereby providing a functional and physical link between CDK2 and CDC7 during firing of the origins of replication. Regulates ATR-mediated checkpoint signaling in response to DNA damage. Part of the 55LCC heterohexameric ATPase complex which is chromatin-associated and promotes replisome proteostasis to maintain replication fork progression and genome stability. Required for replication fork progression, sister chromatid cohesion, and chromosome stability. The ATPase activity is specifically enhanced by replication fork DNA and is coupled to cysteine protease-dependent cleavage of replisome substrates in response to replication fork damage. Uses ATPase activity to process replisome substrates in S-phase, facilitating their proteolytic turnover from chromatin to ensure DNA replication and mitotic fidelity. As part of 55LCC complex, also involved in the cytoplasmic maturation steps of pre-60S ribosomal particles by promoting the release of shuttling protein RSL24D1/RLP24 from the pre-ribosomal particles. This chain is Cyclin-dependent kinase 2-interacting protein (CINP), found in Bos taurus (Bovine).